The sequence spans 337 residues: Phosphoribosylformylglycinamidine cyclo-ligase (337 aa).

It belongs to the AIR synthase family.

The protein localises to the cytoplasm. It catalyses the reaction 2-formamido-N(1)-(5-O-phospho-beta-D-ribosyl)acetamidine + ATP = 5-amino-1-(5-phospho-beta-D-ribosyl)imidazole + ADP + phosphate + H(+). Its pathway is purine metabolism; IMP biosynthesis via de novo pathway; 5-amino-1-(5-phospho-D-ribosyl)imidazole from N(2)-formyl-N(1)-(5-phospho-D-ribosyl)glycinamide: step 2/2. This Gloeobacter violaceus (strain ATCC 29082 / PCC 7421) protein is Phosphoribosylformylglycinamidine cyclo-ligase.